A 498-amino-acid polypeptide reads, in one-letter code: Glycerol kinase (498 aa).

T11 lines the ADP pocket. Residues T11, S12, and S13 each coordinate ATP. Sn-glycerol 3-phosphate is bound at residue T11. Residue R15 coordinates ADP. Positions 81, 82, 133, and 242 each coordinate sn-glycerol 3-phosphate. Positions 81, 82, 133, 242, and 243 each coordinate glycerol. Residues T264 and G307 each contribute to the ADP site. Residues T264, G307, Q311, and G412 each contribute to the ATP site. ADP is bound by residues G412 and N416.

The protein belongs to the FGGY kinase family.

The enzyme catalyses glycerol + ATP = sn-glycerol 3-phosphate + ADP + H(+). Its pathway is polyol metabolism; glycerol degradation via glycerol kinase pathway; sn-glycerol 3-phosphate from glycerol: step 1/1. Inhibited by fructose 1,6-bisphosphate (FBP). In terms of biological role, key enzyme in the regulation of glycerol uptake and metabolism. Catalyzes the phosphorylation of glycerol to yield sn-glycerol 3-phosphate. In Delftia acidovorans (strain DSM 14801 / SPH-1), this protein is Glycerol kinase.